We begin with the raw amino-acid sequence, 409 residues long: MSKTIPIVDAQHAGSAYQHVPGHPDPQLSAVAKGTPTGEYLRRYWQPVALSADVTDRPQMVRILGEDLVLFRDKAGRPGLLYPRCMHRGTSLYYGHVEEAGIRCCYHGWLFAVDGTCLNQPCEPEGGLRREAARQPWYPVEERYGLVFAYMGPPEKKPVLPRYDILEDLEEGEFIEVISGGFVSYADHVEDPNVPYHWLQNWENIMDPYHVYILHSTFSGIQFAENFKILPRVDFEAVDGGVIYHAWRDLEDGRQLERINSALFPNISAIPMIDLSPGQGRWIGWHVAVDDQHYRGFFAARTRQPGNFAPIKMHNGKSWTELSEQEKQDFPGDFEAQFGQGRVTLHGEEHLATSDHGIALLRRQMKQQIAIVQQGGDPAGVHFNEADALVRIRSGNFYTTSDKTETAAD.

The 105-residue stretch at 45–149 (WQPVALSADV…VEERYGLVFA (105 aa)) folds into the Rieske domain. Residues Cys-85, His-87, Cys-104, and His-107 each coordinate [2Fe-2S] cluster. Fe cation-binding residues include His-210 and His-215.

The protein belongs to the bacterial ring-hydroxylating dioxygenase alpha subunit family. In terms of assembly, this dioxygenase system consists of two proteins: the alpha subunit (PobA) and a subunit (PobB) that acts as a ferredoxin and a ferredoxin reductase. [2Fe-2S] cluster serves as cofactor. Fe cation is required as a cofactor.

It functions in the pathway aromatic compound metabolism; carboxydiphenyl ether degradation. In terms of biological role, degrades exclusively diarylether compounds having carboxyl groups in the 3- or 4-position. Yields a hemiacetal that spontaneously hydrolyzes to phenol and protocatechuate. This chain is Phenoxybenzoate dioxygenase subunit alpha (pobA), found in Ectopseudomonas oleovorans (Pseudomonas oleovorans).